The following is a 145-amino-acid chain: Deoxyuridine 5'-triphosphate nucleotidohydrolase (145 aa).

Residues 65-67 (RSG), asparagine 78, and 82-84 (TID) each bind substrate.

The protein belongs to the dUTPase family. The cofactor is Mg(2+).

The catalysed reaction is dUTP + H2O = dUMP + diphosphate + H(+). The protein operates within pyrimidine metabolism; dUMP biosynthesis; dUMP from dCTP (dUTP route): step 2/2. Functionally, this enzyme is involved in nucleotide metabolism: it produces dUMP, the immediate precursor of thymidine nucleotides and it decreases the intracellular concentration of dUTP so that uracil cannot be incorporated into DNA. This is Deoxyuridine 5'-triphosphate nucleotidohydrolase from Clostridium tetani (strain Massachusetts / E88).